We begin with the raw amino-acid sequence, 96 residues long: MSRSCELTGKGVQSGNNVSHANNKTKRKFLPNLCNVTLISDALGQRFRLRVSAAALRSVEHRGGLDAFLLKADETELSMRARLLRRQIVKKAAEAA.

Residues 1-22 (MSRSCELTGKGVQSGNNVSHAN) show a composition bias toward polar residues. The interval 1–24 (MSRSCELTGKGVQSGNNVSHANNK) is disordered.

It belongs to the bacterial ribosomal protein bL28 family.

The chain is Large ribosomal subunit protein bL28 from Sinorhizobium medicae (strain WSM419) (Ensifer medicae).